Here is a 175-residue protein sequence, read N- to C-terminus: Ribosome-binding factor A (175 aa).

A disordered region spans residues 125–175 (TAKHAGEADPYKSDAPEDVDIDEDDFDEEDIDLAGDDDIDEDANKDADSSK). The span at 128 to 139 (HAGEADPYKSDA) shows a compositional bias: basic and acidic residues. A compositionally biased stretch (acidic residues) spans 140-165 (PEDVDIDEDDFDEEDIDLAGDDDIDE). Positions 166-175 (DANKDADSSK) are enriched in basic and acidic residues.

It belongs to the RbfA family. In terms of assembly, monomer. Binds 30S ribosomal subunits, but not 50S ribosomal subunits or 70S ribosomes.

Its subcellular location is the cytoplasm. Its function is as follows. One of several proteins that assist in the late maturation steps of the functional core of the 30S ribosomal subunit. Associates with free 30S ribosomal subunits (but not with 30S subunits that are part of 70S ribosomes or polysomes). Required for efficient processing of 16S rRNA. May interact with the 5'-terminal helix region of 16S rRNA. This chain is Ribosome-binding factor A, found in Pseudarthrobacter chlorophenolicus (strain ATCC 700700 / DSM 12829 / CIP 107037 / JCM 12360 / KCTC 9906 / NCIMB 13794 / A6) (Arthrobacter chlorophenolicus).